The following is a 262-amino-acid chain: Global transcriptional regulator CodY (262 aa).

The GAF domain stretch occupies residues Met-1–Leu-159. Residues Ala-207–Arg-226 constitute a DNA-binding region (H-T-H motif).

It belongs to the CodY family.

The protein resides in the cytoplasm. In terms of biological role, DNA-binding global transcriptional regulator which is involved in the adaptive response to starvation and acts by directly or indirectly controlling the expression of numerous genes in response to nutrient availability. During rapid exponential growth, CodY is highly active and represses genes whose products allow adaptation to nutrient depletion. The polypeptide is Global transcriptional regulator CodY (Streptococcus pneumoniae serotype 4 (strain ATCC BAA-334 / TIGR4)).